A 455-amino-acid polypeptide reads, in one-letter code: Keratin, type I cuticular Ha5 (455 aa).

The tract at residues Met-1–Glu-97 is head. One can recognise an IF rod domain in the interval Glu-97–Leu-408. Positions Lys-98 to Trp-132 are coil 1A. The tract at residues Cys-133–Asp-143 is linker 1. Positions Tyr-144–Cys-244 are coil 1B. The segment at Gln-245–Val-260 is linker 12. Positions Asp-261–Glu-404 are coil 2. Positions Asp-405–Phe-455 are tail.

This sequence belongs to the intermediate filament family.

The protein is Keratin, type I cuticular Ha5 of Ovis aries (Sheep).